A 120-amino-acid chain; its full sequence is Large ribosomal subunit protein bL20 (120 aa).

This sequence belongs to the bacterial ribosomal protein bL20 family.

Binds directly to 23S ribosomal RNA and is necessary for the in vitro assembly process of the 50S ribosomal subunit. It is not involved in the protein synthesizing functions of that subunit. The protein is Large ribosomal subunit protein bL20 of Xanthobacter autotrophicus (strain ATCC BAA-1158 / Py2).